The following is a 233-amino-acid chain: Favin (233 aa).

Residues glutamate 120 and aspartate 122 each coordinate Mn(2+). The Ca(2+) site is built by aspartate 122, phenylalanine 124, asparagine 126, and aspartate 130. Mn(2+) is bound by residues aspartate 130 and histidine 137. Residue asparagine 168 is glycosylated (N-linked (GlcNAc...) asparagine).

The protein belongs to the leguminous lectin family. In terms of assembly, heterodimer of an alpha and a beta chain.

The polypeptide is Favin (Vicia faba (Broad bean)).